A 295-amino-acid chain; its full sequence is Acetyl-coenzyme A carboxylase carboxyl transferase subunit beta (295 aa).

Positions 1 to 20 are disordered; sequence MSWLSKLMPSGIRTENTPAK. The 268-residue stretch at 28–295 folds into the CoA carboxyltransferase N-terminal domain; that stretch reads LWEKCSNCGS…QPHPQDADAA (268 aa). Zn(2+) is bound by residues C32, C35, C51, and C54. Residues 32–54 form a C4-type zinc finger; it reads CSNCGSALYGPELEENLEVCPKC.

This sequence belongs to the AccD/PCCB family. In terms of assembly, acetyl-CoA carboxylase is a heterohexamer composed of biotin carboxyl carrier protein (AccB), biotin carboxylase (AccC) and two subunits each of ACCase subunit alpha (AccA) and ACCase subunit beta (AccD). The cofactor is Zn(2+).

The protein resides in the cytoplasm. It catalyses the reaction N(6)-carboxybiotinyl-L-lysyl-[protein] + acetyl-CoA = N(6)-biotinyl-L-lysyl-[protein] + malonyl-CoA. It participates in lipid metabolism; malonyl-CoA biosynthesis; malonyl-CoA from acetyl-CoA: step 1/1. Component of the acetyl coenzyme A carboxylase (ACC) complex. Biotin carboxylase (BC) catalyzes the carboxylation of biotin on its carrier protein (BCCP) and then the CO(2) group is transferred by the transcarboxylase to acetyl-CoA to form malonyl-CoA. The chain is Acetyl-coenzyme A carboxylase carboxyl transferase subunit beta from Xanthomonas campestris pv. campestris (strain 8004).